The following is a 261-amino-acid chain: Indole-3-glycerol phosphate synthase (261 aa).

The protein belongs to the TrpC family.

It carries out the reaction 1-(2-carboxyphenylamino)-1-deoxy-D-ribulose 5-phosphate + H(+) = (1S,2R)-1-C-(indol-3-yl)glycerol 3-phosphate + CO2 + H2O. The protein operates within amino-acid biosynthesis; L-tryptophan biosynthesis; L-tryptophan from chorismate: step 4/5. This chain is Indole-3-glycerol phosphate synthase, found in Burkholderia thailandensis (strain ATCC 700388 / DSM 13276 / CCUG 48851 / CIP 106301 / E264).